Reading from the N-terminus, the 677-residue chain is AP-2 complex subunit beta (677 aa).

Residues 597 to 677 form a disordered region; sequence RLRTRDSNPS…PMTPETHLMD (81 aa). A compositionally biased stretch (basic residues) spans 616–627; it reads KKYNHFHQKSQT. A compositionally biased stretch (polar residues) spans 636 to 654; the sequence is RNSWNPSPFSDESNSNTFS.

It belongs to the adaptor complexes large subunit family. Adaptor protein complex 2 (AP-2) is a heterotetramer composed of two large adaptins (alpha-type subunit apl3 and beta-type subunit apl1), a medium chain (mu-type subunit apm4) and a small adaptin (sigma-type subunit aps2).

It localises to the cell membrane. It is found in the membrane. The protein localises to the coated pit. Its function is as follows. Adaptins are components of the adaptor complexes which link clathrin to receptors in coated vesicles. Clathrin-associated protein complexes are believed to interact with the cytoplasmic tails of membrane proteins, leading to their selection and concentration. Beta adaptin is a subunit of the plasma membrane adaptor. This Schizosaccharomyces pombe (strain 972 / ATCC 24843) (Fission yeast) protein is AP-2 complex subunit beta (apl1).